Here is a 204-residue protein sequence, read N- to C-terminus: Allurin (204 aa).

The first 19 residues, 1 to 19 (MDTFNFIICISALFHSTYG), serve as a signal peptide directing secretion. Residues 36–138 (VDLHNLLRRS…DKMIGHYTQV (103 aa)) form the SCP domain. A helical membrane pass occupies residues 140–161 (WAKTYLLGCGLAFCPGNYYPYV).

The protein belongs to the CRISP family. Expressed only in oviduct.

Its subcellular location is the membrane. The protein resides in the secreted. Involved in sperm chemoattraction. The sequence is that of Allurin (crisp-a) from Xenopus tropicalis (Western clawed frog).